The primary structure comprises 171 residues: Shikimate kinase (171 aa).

11-16 (ATGKTT) provides a ligand contact to ATP. Position 15 (Thr15) interacts with Mg(2+). Asp33, Arg57, and Gly79 together coordinate substrate. Arg117 provides a ligand contact to ATP. Residue Arg136 coordinates substrate.

It belongs to the shikimate kinase family. As to quaternary structure, monomer. It depends on Mg(2+) as a cofactor.

It localises to the cytoplasm. The enzyme catalyses shikimate + ATP = 3-phosphoshikimate + ADP + H(+). It participates in metabolic intermediate biosynthesis; chorismate biosynthesis; chorismate from D-erythrose 4-phosphate and phosphoenolpyruvate: step 5/7. Catalyzes the specific phosphorylation of the 3-hydroxyl group of shikimic acid using ATP as a cosubstrate. The chain is Shikimate kinase from Thermoanaerobacter pseudethanolicus (strain ATCC 33223 / 39E) (Clostridium thermohydrosulfuricum).